The following is a 504-amino-acid chain: ATP-dependent RNA helicase DBP3 (504 aa).

The span at 1 to 14 (MSKDELKDKKRKVE) shows a compositional bias: basic and acidic residues. The disordered stretch occupies residues 1 to 65 (MSKDELKDKK…KSETESFAAS (65 aa)). Over residues 20–53 (SKKKLKKDKKDKKDKKDKKDKKDKKEKKEKKEKK) the composition is skewed to basic residues. A Q motif motif is present at residues 94–120 (LDFSQVSFIDQIQKEISKFPKPTPIQA). A Helicase ATP-binding domain is found at 123–296 (WPYLLAGKDV…SSFMSEPVKV (174 aa)). An ATP-binding site is contributed by 136 to 143 (AETGSGKT). The DEAD box motif lies at 243 to 246 (DEAD). A Helicase C-terminal domain is found at 325–474 (KLLELLKKYH…PVPEELKKFG (150 aa)).

Belongs to the DEAD box helicase family. DDX5/DBP2 subfamily.

The protein resides in the nucleus. It is found in the nucleolus. It carries out the reaction ATP + H2O = ADP + phosphate + H(+). Its function is as follows. ATP-dependent RNA helicase required for 60S ribosomal subunit synthesis. Involved in efficient pre-rRNA processing, predominantly at site A3, which is necessary for the normal formation of 25S and 5.8S rRNAs. The polypeptide is ATP-dependent RNA helicase DBP3 (DBP3) (Kluyveromyces lactis (strain ATCC 8585 / CBS 2359 / DSM 70799 / NBRC 1267 / NRRL Y-1140 / WM37) (Yeast)).